The primary structure comprises 200 residues: Mediator of RNA polymerase II transcription subunit 22 (200 aa).

Residues 93–122 adopt a coiled-coil conformation; it reads SVNEAIDQRNQQLRALQEECDRKLITLRDE. Residues 167–200 form a disordered region; that stretch reads SAPLLASPETGAGPLQSAAPVHSHGGGPGPTEHT. Over residues 190-200 the composition is skewed to gly residues; it reads HGGGPGPTEHT.

It belongs to the Mediator complex subunit 22 family. In terms of assembly, component of the Mediator complex, which is composed of MED1, MED4, MED6, MED7, MED8, MED9, MED10, MED11, MED12, MED13, MED13L, MED14, MED15, MED16, MED17, MED18, MED19, MED20, MED21, MED22, MED23, MED24, MED25, MED26, MED27, MED29, MED30, MED31, CCNC, CDK8 and CDC2L6/CDK11. The MED12, MED13, CCNC and CDK8 subunits form a distinct module termed the CDK8 module. Mediator containing the CDK8 module is less active than Mediator lacking this module in supporting transcriptional activation. Individual preparations of the Mediator complex lacking one or more distinct subunits have been variously termed ARC, CRSP, DRIP, PC2, SMCC and TRAP.

It is found in the nucleus. Its function is as follows. Component of the Mediator complex, a coactivator involved in the regulated transcription of nearly all RNA polymerase II-dependent genes. Mediator functions as a bridge to convey information from gene-specific regulatory proteins to the basal RNA polymerase II transcription machinery. Mediator is recruited to promoters by direct interactions with regulatory proteins and serves as a scaffold for the assembly of a functional preinitiation complex with RNA polymerase II and the general transcription factors. This Rattus norvegicus (Rat) protein is Mediator of RNA polymerase II transcription subunit 22 (Med22).